A 545-amino-acid chain; its full sequence is CTP synthase (545 aa).

Residues 1 to 266 form an amidoligase domain region; the sequence is MTTRYIFVTG…DDLVVKRFGL (266 aa). Position 14 (S14) interacts with CTP. S14 lines the UTP pocket. ATP contacts are provided by residues 15–20 and D72; that span reads SLGKGI. Mg(2+) contacts are provided by D72 and E140. CTP is bound by residues 147 to 149, 187 to 192, and K223; these read DIE and KTKPTQ. Residues 187-192 and K223 each bind UTP; that span reads KTKPTQ. 239-241 contributes to the ATP binding site; sequence KDV. In terms of domain architecture, Glutamine amidotransferase type-1 spans 291 to 542; that stretch reads VIGMVGKYIE…IAAASAHQKR (252 aa). G352 is a binding site for L-glutamine. The active-site Nucleophile; for glutamine hydrolysis is the C379. L-glutamine-binding positions include 380–383, E403, and R470; that span reads LGMQ. Residues H515 and E517 contribute to the active site.

Belongs to the CTP synthase family. Homotetramer.

It carries out the reaction UTP + L-glutamine + ATP + H2O = CTP + L-glutamate + ADP + phosphate + 2 H(+). It catalyses the reaction L-glutamine + H2O = L-glutamate + NH4(+). The enzyme catalyses UTP + NH4(+) + ATP = CTP + ADP + phosphate + 2 H(+). It participates in pyrimidine metabolism; CTP biosynthesis via de novo pathway; CTP from UDP: step 2/2. Its activity is regulated as follows. Allosterically activated by GTP, when glutamine is the substrate; GTP has no effect on the reaction when ammonia is the substrate. The allosteric effector GTP functions by stabilizing the protein conformation that binds the tetrahedral intermediate(s) formed during glutamine hydrolysis. Inhibited by the product CTP, via allosteric rather than competitive inhibition. Functionally, catalyzes the ATP-dependent amination of UTP to CTP with either L-glutamine or ammonia as the source of nitrogen. Regulates intracellular CTP levels through interactions with the four ribonucleotide triphosphates. The chain is CTP synthase from Shewanella baltica (strain OS155 / ATCC BAA-1091).